Consider the following 375-residue polypeptide: Anhydro-N-acetylmuramic acid kinase (375 aa).

An ATP-binding site is contributed by 12–19 (GTSLDGVD).

The protein belongs to the anhydro-N-acetylmuramic acid kinase family.

The enzyme catalyses 1,6-anhydro-N-acetyl-beta-muramate + ATP + H2O = N-acetyl-D-muramate 6-phosphate + ADP + H(+). It participates in amino-sugar metabolism; 1,6-anhydro-N-acetylmuramate degradation. It functions in the pathway cell wall biogenesis; peptidoglycan recycling. Its function is as follows. Catalyzes the specific phosphorylation of 1,6-anhydro-N-acetylmuramic acid (anhMurNAc) with the simultaneous cleavage of the 1,6-anhydro ring, generating MurNAc-6-P. Is required for the utilization of anhMurNAc either imported from the medium or derived from its own cell wall murein, and thus plays a role in cell wall recycling. In Mannheimia succiniciproducens (strain KCTC 0769BP / MBEL55E), this protein is Anhydro-N-acetylmuramic acid kinase.